The sequence spans 174 residues: Adipose-secreted signaling protein (174 aa).

Residue A2 is modified to N-acetylalanine. The residue at position 147 (T147) is a Phosphothreonine.

This sequence belongs to the ADISSP family.

The protein resides in the secreted. Functionally, adipocyte-secreted protein (adipokine) that acts as a key regulator for white adipose tissue (WAT) thermogenesis and glucose homeostasis at least in part through activation of protein kinase A (PKA). In Bos taurus (Bovine), this protein is Adipose-secreted signaling protein.